The chain runs to 265 residues: Pyrroline-5-carboxylate reductase (265 aa).

Belongs to the pyrroline-5-carboxylate reductase family.

The protein localises to the cytoplasm. The catalysed reaction is L-proline + NADP(+) = (S)-1-pyrroline-5-carboxylate + NADPH + 2 H(+). It carries out the reaction L-proline + NAD(+) = (S)-1-pyrroline-5-carboxylate + NADH + 2 H(+). It functions in the pathway amino-acid biosynthesis; L-proline biosynthesis; L-proline from L-glutamate 5-semialdehyde: step 1/1. Functionally, catalyzes the reduction of 1-pyrroline-5-carboxylate (PCA) to L-proline. This chain is Pyrroline-5-carboxylate reductase, found in Aquifex aeolicus (strain VF5).